Reading from the N-terminus, the 337-residue chain is Methylthioribose-1-phosphate isomerase (337 aa).

Substrate-binding positions include 47–49, R81, and Q184; that span reads RGA. Catalysis depends on D225, which acts as the Proton donor. 235 to 236 serves as a coordination point for substrate; sequence NK.

The protein belongs to the eIF-2B alpha/beta/delta subunits family. MtnA subfamily.

The catalysed reaction is 5-(methylsulfanyl)-alpha-D-ribose 1-phosphate = 5-(methylsulfanyl)-D-ribulose 1-phosphate. Its pathway is amino-acid biosynthesis; L-methionine biosynthesis via salvage pathway; L-methionine from S-methyl-5-thio-alpha-D-ribose 1-phosphate: step 1/6. Functionally, catalyzes the interconversion of methylthioribose-1-phosphate (MTR-1-P) into methylthioribulose-1-phosphate (MTRu-1-P). This is Methylthioribose-1-phosphate isomerase from Synechococcus sp. (strain CC9605).